The following is a 166-amino-acid chain: Probable tyrosine-protein phosphatase DG1060 (166 aa).

Residues 9 to 162 (NFGMVADDLY…LVTYNNAPQW (154 aa)) form the Tyrosine-protein phosphatase domain. The Phosphocysteine intermediate role is filled by cysteine 101.

The protein belongs to the protein-tyrosine phosphatase family.

Its subcellular location is the cytoplasm. It carries out the reaction O-phospho-L-tyrosyl-[protein] + H2O = L-tyrosyl-[protein] + phosphate. The protein is Probable tyrosine-protein phosphatase DG1060 (DG1060) of Dictyostelium discoideum (Social amoeba).